The primary structure comprises 907 residues: Schlafen family member 13 (907 aa).

The segment at 1-353 (MEIHPSLVVE…WVRMMVDIGP (353 aa)) is n'-domain region. Catalysis depends on residues Glu-205 and Glu-210. Residues His-281, Cys-283, and Cys-318 each contribute to the Zn(2+) site. 604 to 611 (GMPGSGKT) contributes to the ATP binding site.

Belongs to the Schlafen family. Subgroup III subfamily. The cofactor is Mg(2+).

The protein resides in the cytoplasm. In terms of biological role, endoribonuclease that cleaves tRNAs and rRNAs. Cleaves tRNAs 11 nucleotides from the 3'-terminus at the acceptor stem. Does not act on tRNA(Sec). The protein is Schlafen family member 13 of Rattus norvegicus (Rat).